The following is a 133-amino-acid chain: Profilin (133 aa).

The protein belongs to the profilin family. As to quaternary structure, occurs in many kinds of cells as a complex with monomeric actin in a 1:1 ratio.

It localises to the cytoplasm. The protein localises to the cytoskeleton. Functionally, binds to actin and affects the structure of the cytoskeleton. At high concentrations, profilin prevents the polymerization of actin, whereas it enhances it at low concentrations. By binding to PIP2, it inhibits the formation of IP3 and DG. This chain is Profilin, found in Helianthus annuus (Common sunflower).